The primary structure comprises 269 residues: Ubiquinone/menaquinone biosynthesis C-methyltransferase UbiE (269 aa).

S-adenosyl-L-methionine contacts are provided by residues Thr-92, Asp-113, and Asn-141–Ala-142.

Belongs to the class I-like SAM-binding methyltransferase superfamily. MenG/UbiE family.

It catalyses the reaction a 2-demethylmenaquinol + S-adenosyl-L-methionine = a menaquinol + S-adenosyl-L-homocysteine + H(+). The catalysed reaction is a 2-methoxy-6-(all-trans-polyprenyl)benzene-1,4-diol + S-adenosyl-L-methionine = a 5-methoxy-2-methyl-3-(all-trans-polyprenyl)benzene-1,4-diol + S-adenosyl-L-homocysteine + H(+). It participates in quinol/quinone metabolism; menaquinone biosynthesis; menaquinol from 1,4-dihydroxy-2-naphthoate: step 2/2. The protein operates within cofactor biosynthesis; ubiquinone biosynthesis. Functionally, methyltransferase required for the conversion of demethylmenaquinol (DMKH2) to menaquinol (MKH2) and the conversion of 2-polyprenyl-6-methoxy-1,4-benzoquinol (DDMQH2) to 2-polyprenyl-3-methyl-6-methoxy-1,4-benzoquinol (DMQH2). The polypeptide is Ubiquinone/menaquinone biosynthesis C-methyltransferase UbiE (Brucella melitensis biotype 2 (strain ATCC 23457)).